Here is a 133-residue protein sequence, read N- to C-terminus: Osteocrin (133 aa).

Positions 1–27 are cleaved as a signal peptide; it reads MLDWRLASAHFILAVTLTLWSSGKVLS. Arg132 carries the arginine amide modification.

Belongs to the Osteocrin family. Interacts with NPR3. As to expression, enriched in neocortical regions of the developing cerebral cortex. Not expressed in other compartments of the neocortical wall or in brain regions such as the hippocampus, striatum, mediodorsal nucleus of the thalamus and cerebellum. Also expressed in bone. In developing neonatal rib bone, present at high level in osteoblasts on bone-forming surfaces, in newly incorporated osteocytes and in some late hypertrophic chondrocytes (at protein level). In adult bone, localizes specifically to osteoblasts and young osteocytes at bone-forming sites (at protein level).

The protein resides in the secreted. Hormone that acts as a regulator of dendritic growth in the developing cerebral cortex in response to sensory experience. Induced in the brain following membrane depolarization and inhibits dendritic branching in neurons of the developing cortex. Probably acts by binding to natriuretic peptide receptor NPR3/NPR-C, thereby preventing binding between NPR3/NPR-C and natriuretic peptides, leading to increase cGMP production. This is Osteocrin from Homo sapiens (Human).